The primary structure comprises 209 residues: 7-carboxy-7-deazaguanine synthase (209 aa).

Substrate is bound by residues 10 to 12 (IQG) and Arg25. The Radical SAM core domain maps to 16 to 205 (YAGLPMLFVR…PQIHKIIYGD (190 aa)). The [4Fe-4S] cluster site is built by Cys29, Cys33, and Cys36. Thr38 contacts Mg(2+). Thr68 is a substrate binding site. Position 70 (Gly70) interacts with S-adenosyl-L-methionine.

The protein belongs to the radical SAM superfamily. 7-carboxy-7-deazaguanine synthase family. Homodimer. Requires [4Fe-4S] cluster as cofactor. The cofactor is S-adenosyl-L-methionine. It depends on Mg(2+) as a cofactor.

It catalyses the reaction 6-carboxy-5,6,7,8-tetrahydropterin + H(+) = 7-carboxy-7-deazaguanine + NH4(+). The protein operates within purine metabolism; 7-cyano-7-deazaguanine biosynthesis. Catalyzes the complex heterocyclic radical-mediated conversion of 6-carboxy-5,6,7,8-tetrahydropterin (CPH4) to 7-carboxy-7-deazaguanine (CDG), a step common to the biosynthetic pathways of all 7-deazapurine-containing compounds. In Thermoplasma acidophilum (strain ATCC 25905 / DSM 1728 / JCM 9062 / NBRC 15155 / AMRC-C165), this protein is 7-carboxy-7-deazaguanine synthase.